A 189-amino-acid polypeptide reads, in one-letter code: Elongation factor P (189 aa).

The protein belongs to the elongation factor P family.

It localises to the cytoplasm. The protein operates within protein biosynthesis; polypeptide chain elongation. In terms of biological role, involved in peptide bond synthesis. Stimulates efficient translation and peptide-bond synthesis on native or reconstituted 70S ribosomes in vitro. Probably functions indirectly by altering the affinity of the ribosome for aminoacyl-tRNA, thus increasing their reactivity as acceptors for peptidyl transferase. In Pseudomonas putida (strain GB-1), this protein is Elongation factor P.